We begin with the raw amino-acid sequence, 503 residues long: Maturase K (503 aa).

The protein belongs to the intron maturase 2 family. MatK subfamily.

It localises to the plastid. It is found in the chloroplast. Functionally, usually encoded in the trnK tRNA gene intron. Probably assists in splicing its own and other chloroplast group II introns. This chain is Maturase K, found in Liquidambar formosana (Formosan gum).